The primary structure comprises 211 residues: dITP/XTP pyrophosphatase (211 aa).

13 to 18 lines the substrate pocket; it reads THNPGK. Mg(2+)-binding residues include D45 and D74. D74 functions as the Proton acceptor in the catalytic mechanism. Residues S75, 160–163, K183, and 195–196 each bind substrate; these read FGYD and HR.

This sequence belongs to the HAM1 NTPase family. As to quaternary structure, homodimer. The cofactor is Mg(2+).

The catalysed reaction is XTP + H2O = XMP + diphosphate + H(+). It carries out the reaction dITP + H2O = dIMP + diphosphate + H(+). It catalyses the reaction ITP + H2O = IMP + diphosphate + H(+). Pyrophosphatase that catalyzes the hydrolysis of nucleoside triphosphates to their monophosphate derivatives, with a high preference for the non-canonical purine nucleotides XTP (xanthosine triphosphate), dITP (deoxyinosine triphosphate) and ITP. Seems to function as a house-cleaning enzyme that removes non-canonical purine nucleotides from the nucleotide pool, thus preventing their incorporation into DNA/RNA and avoiding chromosomal lesions. This Bradyrhizobium diazoefficiens (strain JCM 10833 / BCRC 13528 / IAM 13628 / NBRC 14792 / USDA 110) protein is dITP/XTP pyrophosphatase.